The chain runs to 139 residues: ATP synthase epsilon chain (139 aa).

This sequence belongs to the ATPase epsilon chain family. As to quaternary structure, F-type ATPases have 2 components, CF(1) - the catalytic core - and CF(0) - the membrane proton channel. CF(1) has five subunits: alpha(3), beta(3), gamma(1), delta(1), epsilon(1). CF(0) has three main subunits: a, b and c.

It is found in the cell inner membrane. Functionally, produces ATP from ADP in the presence of a proton gradient across the membrane. This chain is ATP synthase epsilon chain, found in Pseudomonas putida (strain ATCC 47054 / DSM 6125 / CFBP 8728 / NCIMB 11950 / KT2440).